The following is a 251-amino-acid chain: MDSENFKQHLKKLYSVNNGKVKITNEIVKFTQNHSEPLHQVQKDLINYTNTNFESNSYMLTDGNQNQFFTLLLKVLNAKKAIDVGVYTGLSSLSFALSMPDDGKVTSIDCVRDYEECCHLHWKKANVDHKINLVIDNAKNHLQKLIDNGESGTFDFIFIDADKDSYDAYYELSLKLIRKGGIIAFDNILFFGATLVDHDSKKPEDQIFLGCPSFQRMVDALKLLNEKIANDERVIKTMLPLSDGITLVTKK.

Residues threonine 61, aspartate 83, 85-86, serine 91, aspartate 109, and alanine 138 each bind S-adenosyl-L-methionine; that span reads GV. A divalent metal cation is bound at residue aspartate 160. Aspartate 162 is an S-adenosyl-L-methionine binding site. Aspartate 186 and asparagine 187 together coordinate a divalent metal cation.

This sequence belongs to the class I-like SAM-binding methyltransferase superfamily. Cation-dependent O-methyltransferase family. CCoAMT subfamily.

The catalysed reaction is (E)-caffeoyl-CoA + S-adenosyl-L-methionine = (E)-feruloyl-CoA + S-adenosyl-L-homocysteine + H(+). The chain is Probable caffeoyl-CoA O-methyltransferase 3 (omt1) from Dictyostelium discoideum (Social amoeba).